The sequence spans 319 residues: Inositol phosphoceramide mannosyltransferase 1 (319 aa).

A helical membrane pass occupies residues 8–28 (LLLKGIPICGVILLILWGYSL). 2 N-linked (GlcNAc...) asparagine glycosylation sites follow: N115 and N198. The next 2 helical transmembrane spans lie at 211–231 (PTVF…KYLL) and 279–299 (VLFF…RVVF).

The protein belongs to the glycosyltransferase 32 family.

Its subcellular location is the golgi apparatus. It localises to the cis-Golgi network membrane. The protein resides in the trans-Golgi network membrane. In terms of biological role, with imt2 and imt3, is required for the synthesis of mannosyl phosphorylinositol ceramide (MIPC). Catalyzes the addition of mannosyl to phosphorylinositol ceramide (IPC). MIPC is essential for cell morphology, cell-surface distribution of ergosterol, localization for plasma-membrane transporters, and lipid-raft-mediated endocytosis of plasma membrane proteins to the vacuole. The sequence is that of Inositol phosphoceramide mannosyltransferase 1 (imt1) from Schizosaccharomyces pombe (strain 972 / ATCC 24843) (Fission yeast).